We begin with the raw amino-acid sequence, 426 residues long: Enolase (426 aa).

Gln163 is a binding site for (2R)-2-phosphoglycerate. The active-site Proton donor is the Glu205. Mg(2+)-binding residues include Asp242, Glu283, and Asp310. Residues Lys335, Arg364, Ser365, and Lys386 each contribute to the (2R)-2-phosphoglycerate site. Lys335 (proton acceptor) is an active-site residue.

This sequence belongs to the enolase family. Mg(2+) serves as cofactor.

The protein localises to the cytoplasm. The protein resides in the secreted. Its subcellular location is the cell surface. It carries out the reaction (2R)-2-phosphoglycerate = phosphoenolpyruvate + H2O. The protein operates within carbohydrate degradation; glycolysis; pyruvate from D-glyceraldehyde 3-phosphate: step 4/5. In terms of biological role, catalyzes the reversible conversion of 2-phosphoglycerate (2-PG) into phosphoenolpyruvate (PEP). It is essential for the degradation of carbohydrates via glycolysis. This chain is Enolase, found in Paenarthrobacter aurescens (strain TC1).